A 130-amino-acid polypeptide reads, in one-letter code: Small ribosomal subunit protein uS9 (130 aa).

It belongs to the universal ribosomal protein uS9 family.

The polypeptide is Small ribosomal subunit protein uS9 (Desulfosudis oleivorans (strain DSM 6200 / JCM 39069 / Hxd3) (Desulfococcus oleovorans)).